Here is a 119-residue protein sequence, read N- to C-terminus: Large ribosomal subunit protein bL20 (119 aa).

The protein belongs to the bacterial ribosomal protein bL20 family.

Functionally, binds directly to 23S ribosomal RNA and is necessary for the in vitro assembly process of the 50S ribosomal subunit. It is not involved in the protein synthesizing functions of that subunit. This is Large ribosomal subunit protein bL20 from Chloroflexus aggregans (strain MD-66 / DSM 9485).